Consider the following 845-residue polypeptide: Protein P (845 aa).

Residues M1–Q179 form a terminal protein domain (TP) region. Residues E180–R348 are spacer. Residues G226–I245 form a disordered region. A polymerase/reverse transcriptase domain (RT) region spans residues E349–Q692. Residues E359–I602 enclose the Reverse transcriptase domain. Mg(2+) is bound by residues D431, D553, and D554.

Belongs to the hepadnaviridae P protein family.

It catalyses the reaction DNA(n) + a 2'-deoxyribonucleoside 5'-triphosphate = DNA(n+1) + diphosphate. The enzyme catalyses Endonucleolytic cleavage to 5'-phosphomonoester.. Activated by host HSP70 and HSP40 in vitro to be able to bind the epsilon loop of the pgRNA. Because deletion of the RNase H region renders the protein partly chaperone-independent, the chaperones may be needed indirectly to relieve occlusion of the RNA-binding site by this domain. Inhibited by several reverse-transcriptase inhibitors: Lamivudine, Adefovir and Entecavir. Functionally, multifunctional enzyme that converts the viral RNA genome into dsDNA in viral cytoplasmic capsids. This enzyme displays a DNA polymerase activity that can copy either DNA or RNA templates, and a ribonuclease H (RNase H) activity that cleaves the RNA strand of RNA-DNA heteroduplexes in a partially processive 3'- to 5'-endonucleasic mode. Neo-synthesized pregenomic RNA (pgRNA) are encapsidated together with the P protein, and reverse-transcribed inside the nucleocapsid. Initiation of reverse-transcription occurs first by binding the epsilon loop on the pgRNA genome, and is initiated by protein priming, thereby the 5'-end of (-)DNA is covalently linked to P protein. Partial (+)DNA is synthesized from the (-)DNA template and generates the relaxed circular DNA (RC-DNA) genome. After budding and infection, the RC-DNA migrates in the nucleus, and is converted into a plasmid-like covalently closed circular DNA (cccDNA). The activity of P protein does not seem to be necessary for cccDNA generation, and is presumably released from (+)DNA by host nuclear DNA repair machinery. This Homo sapiens (Human) protein is Protein P.